The primary structure comprises 79 residues: Putative membrane protein insertion efficiency factor (79 aa).

It belongs to the UPF0161 family.

The protein localises to the cell inner membrane. Its function is as follows. Could be involved in insertion of integral membrane proteins into the membrane. The chain is Putative membrane protein insertion efficiency factor from Cytophaga hutchinsonii (strain ATCC 33406 / DSM 1761 / CIP 103989 / NBRC 15051 / NCIMB 9469 / D465).